A 198-amino-acid polypeptide reads, in one-letter code: Na(+)-translocating NADH-quinone reductase subunit E (198 aa).

The next 6 helical transmembrane spans lie at 11–31, 35–55, 77–97, 110–130, 140–160, and 176–196; these read SVFIENMALSFFLGMCTFLAV, VSTAFGLGIAVIVVLGIAVPA, FLNFITFIGVIAALVQILEMI, GIFLPLITVNCAIFGGVSFMV, VVYGLGAGTGWMLAIVALAGL, and LGITFITVGLMALGFMSFSGI.

Belongs to the NqrDE/RnfAE family. In terms of assembly, composed of six subunits; NqrA, NqrB, NqrC, NqrD, NqrE and NqrF.

The protein resides in the cell inner membrane. It carries out the reaction a ubiquinone + n Na(+)(in) + NADH + H(+) = a ubiquinol + n Na(+)(out) + NAD(+). Its function is as follows. NQR complex catalyzes the reduction of ubiquinone-1 to ubiquinol by two successive reactions, coupled with the transport of Na(+) ions from the cytoplasm to the periplasm. NqrA to NqrE are probably involved in the second step, the conversion of ubisemiquinone to ubiquinol. The protein is Na(+)-translocating NADH-quinone reductase subunit E of Actinobacillus pleuropneumoniae serotype 5b (strain L20).